A 180-amino-acid chain; its full sequence is Amnesiac neuropeptides (180 aa).

A signal peptide spans 1 to 32 (MRSFCCCFYPAAVALHCVLLFYTFFLLFRASA). 2 consecutive propeptides follow at residues 33–35 (LRR) and 152–180 (GRRS…GEMR). The tract at residues 155–180 (SVPRGQPKFSRENPRALSPSLLGEMR) is disordered.

As to expression, enriched expression in the embryonic and larval nervous systems. Strongly expressed in two large neurons that project over all the lobes of the mushroom bodies.

The protein resides in the secreted. Its function is as follows. Required for associative learning and memory in adults. Expression pattern suggests a modulatory role in memory formation. Controls neurotransmitter-mediated signaling pathways associated with the structure of the larval peripheral nerve. The sequence is that of Amnesiac neuropeptides (amn) from Drosophila melanogaster (Fruit fly).